The following is a 308-amino-acid chain: Glutaminase 2 (308 aa).

Positions 66, 117, 161, 168, 192, 244, and 262 each coordinate substrate.

The protein belongs to the glutaminase family. As to quaternary structure, homotetramer.

It catalyses the reaction L-glutamine + H2O = L-glutamate + NH4(+). In Shigella flexneri, this protein is Glutaminase 2.